The primary structure comprises 91 residues: MWPVLWAAARTYAPYITFPVAFVVGAVGYQLEWFIRGTPEQPVEELSILEKREERTLQETMGKDVTQVLSLKEKLEFTPKAVLNRNRQEKS.

The helical transmembrane segment at 12-34 (YAPYITFPVAFVVGAVGYQLEWF) threads the bilayer.

It belongs to the SMIM12 family.

The protein localises to the membrane. The sequence is that of Small integral membrane protein 12 (smim12) from Xenopus tropicalis (Western clawed frog).